Consider the following 145-residue polypeptide: Bacilliredoxin SAR1592 (145 aa).

Belongs to the bacilliredoxin family.

This Staphylococcus aureus (strain MRSA252) protein is Bacilliredoxin SAR1592.